The chain runs to 161 residues: Phosphopantetheine adenylyltransferase (161 aa).

Residue threonine 9 coordinates substrate. Residues 9 to 10 (TF) and histidine 17 contribute to the ATP site. Substrate is bound by residues lysine 41, leucine 73, and arginine 87. Residues 88-90 (GLR), glutamate 98, and 123-129 (YQFISGT) contribute to the ATP site.

Belongs to the bacterial CoaD family. Homohexamer. The cofactor is Mg(2+).

It localises to the cytoplasm. It carries out the reaction (R)-4'-phosphopantetheine + ATP + H(+) = 3'-dephospho-CoA + diphosphate. The protein operates within cofactor biosynthesis; coenzyme A biosynthesis; CoA from (R)-pantothenate: step 4/5. Functionally, reversibly transfers an adenylyl group from ATP to 4'-phosphopantetheine, yielding dephospho-CoA (dPCoA) and pyrophosphate. The protein is Phosphopantetheine adenylyltransferase of Cupriavidus metallidurans (strain ATCC 43123 / DSM 2839 / NBRC 102507 / CH34) (Ralstonia metallidurans).